Consider the following 333-residue polypeptide: 4-hydroxythreonine-4-phosphate dehydrogenase (333 aa).

Residues His136 and Thr137 each coordinate substrate. The a divalent metal cation site is built by His166, His211, and His266. Positions 274, 283, and 292 each coordinate substrate.

Belongs to the PdxA family. Homodimer. Zn(2+) is required as a cofactor. The cofactor is Mg(2+). Requires Co(2+) as cofactor.

Its subcellular location is the cytoplasm. It carries out the reaction 4-(phosphooxy)-L-threonine + NAD(+) = 3-amino-2-oxopropyl phosphate + CO2 + NADH. It participates in cofactor biosynthesis; pyridoxine 5'-phosphate biosynthesis; pyridoxine 5'-phosphate from D-erythrose 4-phosphate: step 4/5. Its function is as follows. Catalyzes the NAD(P)-dependent oxidation of 4-(phosphooxy)-L-threonine (HTP) into 2-amino-3-oxo-4-(phosphooxy)butyric acid which spontaneously decarboxylates to form 3-amino-2-oxopropyl phosphate (AHAP). The protein is 4-hydroxythreonine-4-phosphate dehydrogenase of Acidithiobacillus ferrooxidans (strain ATCC 23270 / DSM 14882 / CIP 104768 / NCIMB 8455) (Ferrobacillus ferrooxidans (strain ATCC 23270)).